The chain runs to 462 residues: Glutamate decarboxylase alpha (462 aa).

K273 carries the N6-(pyridoxal phosphate)lysine modification.

The protein belongs to the group II decarboxylase family. It depends on pyridoxal 5'-phosphate as a cofactor.

It catalyses the reaction L-glutamate + H(+) = 4-aminobutanoate + CO2. Functionally, converts internalized glutamate to GABA and increases the internal pH. Involved in glutamate-dependent acid resistance in gastric fluid. The sequence is that of Glutamate decarboxylase alpha (gadA) from Listeria monocytogenes serovar 1/2a (strain ATCC BAA-679 / EGD-e).